The sequence spans 173 residues: Crossover junction endodeoxyribonuclease RuvC (173 aa).

Residues Asp8, Glu67, and Asp139 contribute to the active site. Mg(2+) is bound by residues Asp8, Glu67, and Asp139.

The protein belongs to the RuvC family. In terms of assembly, homodimer which binds Holliday junction (HJ) DNA. The HJ becomes 2-fold symmetrical on binding to RuvC with unstacked arms; it has a different conformation from HJ DNA in complex with RuvA. In the full resolvosome a probable DNA-RuvA(4)-RuvB(12)-RuvC(2) complex forms which resolves the HJ. Mg(2+) is required as a cofactor.

The protein resides in the cytoplasm. The enzyme catalyses Endonucleolytic cleavage at a junction such as a reciprocal single-stranded crossover between two homologous DNA duplexes (Holliday junction).. Functionally, the RuvA-RuvB-RuvC complex processes Holliday junction (HJ) DNA during genetic recombination and DNA repair. Endonuclease that resolves HJ intermediates. Cleaves cruciform DNA by making single-stranded nicks across the HJ at symmetrical positions within the homologous arms, yielding a 5'-phosphate and a 3'-hydroxyl group; requires a central core of homology in the junction. The consensus cleavage sequence is 5'-(A/T)TT(C/G)-3'. Cleavage occurs on the 3'-side of the TT dinucleotide at the point of strand exchange. HJ branch migration catalyzed by RuvA-RuvB allows RuvC to scan DNA until it finds its consensus sequence, where it cleaves and resolves the cruciform DNA. The sequence is that of Crossover junction endodeoxyribonuclease RuvC from Shewanella woodyi (strain ATCC 51908 / MS32).